Here is a 388-residue protein sequence, read N- to C-terminus: Quinolone resistance protein NorA (388 aa).

A run of 12 helical transmembrane segments spans residues 5–25, 42–62, 69–89, 99–119, 129–149, 157–177, 201–221, 239–259, 269–289, 293–313, 331–351, and 355–375; these read IFVL…VIPV, LLVA…GTLA, LIIC…AVGH, VIGG…IADI, FGYM…IGGF, MPFY…IVLI, WKVF…LSAF, DISI…IYFF, LTFI…LVFA, WSIM…RPAI, LNST…GALF, and IEAP…IVLI.

It belongs to the major facilitator superfamily. TCR/Tet family.

It localises to the cell membrane. Functionally, involved in quinolone resistance. May constitute a membrane-associated active efflux pump of hydrophilic quinolones. The sequence is that of Quinolone resistance protein NorA (norA) from Staphylococcus aureus (strain MSSA476).